Reading from the N-terminus, the 66-residue chain is Conotoxin Ca5.2 (66 aa).

The signal sequence occupies residues 1-22 (MRCVPVFLILLGLIASAPSVDA). Residues 23 to 48 (RPQTKDDALASFHDSAKRHLQRLVNA) constitute a propeptide that is removed on maturation. Residue Phe62 is modified to Phenylalanine amide.

The protein belongs to the conotoxin T superfamily. Contains 2 disulfide bonds that can be either 'C1-C3, C2-C4' or 'C1-C4, C2-C3', since these disulfide connectivities have been observed for conotoxins with cysteine framework V (for examples, see AC P0DQQ7 and AC P81755). As to expression, expressed by the venom duct.

It is found in the secreted. The chain is Conotoxin Ca5.2 from Conus caracteristicus (Characteristic cone).